We begin with the raw amino-acid sequence, 105 residues long: Large ribosomal subunit protein uL24 (105 aa).

This sequence belongs to the universal ribosomal protein uL24 family. As to quaternary structure, part of the 50S ribosomal subunit.

In terms of biological role, one of two assembly initiator proteins, it binds directly to the 5'-end of the 23S rRNA, where it nucleates assembly of the 50S subunit. Its function is as follows. One of the proteins that surrounds the polypeptide exit tunnel on the outside of the subunit. The protein is Large ribosomal subunit protein uL24 of Xylella fastidiosa (strain 9a5c).